Here is a 58-residue protein sequence, read N- to C-terminus: Small ribosomal subunit protein uS14 (58 aa).

A disordered region spans residues 1-21 (MSESETEQTGEHASHRTGQTH). The span at 9 to 21 (TGEHASHRTGQTH) shows a compositional bias: basic and acidic residues. Zn(2+) is bound by residues Cys23, Cys26, Cys41, and Cys44.

The protein belongs to the universal ribosomal protein uS14 family. Zinc-binding uS14 subfamily. As to quaternary structure, part of the 30S ribosomal subunit. Zn(2+) is required as a cofactor.

In terms of biological role, binds 16S rRNA, required for the assembly of 30S particles. This is Small ribosomal subunit protein uS14 from Haloquadratum walsbyi (strain DSM 16790 / HBSQ001).